A 145-amino-acid chain; its full sequence is Hemoglobin subunit beta (145 aa).

In terms of domain architecture, Globin spans 1–145 (MLTAEEKAAV…VANALAHRYH (145 aa)). T11 is modified (phosphothreonine). S43 bears the Phosphoserine mark. K58 is subject to N6-acetyllysine. H62 is a heme b binding site. Position 81 is an N6-acetyllysine (K81). H91 provides a ligand contact to heme b. Residue C92 is modified to S-nitrosocysteine.

Belongs to the globin family. As to quaternary structure, heterotetramer of two alpha chains and two beta chains. In terms of tissue distribution, red blood cells.

Its function is as follows. Involved in oxygen transport from the lung to the various peripheral tissues. The protein is Hemoglobin subunit beta (HBB) of Tragelaphus strepsiceros (Greater kudu).